We begin with the raw amino-acid sequence, 378 residues long: MTRVFHPALSGPEQSRYQITDVASVSRSGLCINESPIRDRCGRTMGDLRLSVIDQCNLRCRYCMPEAEYAWLPRADLLSVDEISLIVDAFIAVGVDKIRLTGGEPLIRSDLAAIIEVISAKVGDGSGLQDLAITTNGVLLADQARKLKSAGMRRITISLDTLRPDRFKAISQRGTHYKVIEGIEAVAAAGFTDTKLDSVVIRGFNDDELSDLIEFARNVNAEVRFIEYMDVGGATQWSMDKVFTKAQMLSTLGKKYGPIAALPKYDSAPANRYRLPDGTTFGIIASTTEPFCATCDRSRLTADGIWLHCLYALSGINLRESVRAGASANDVVQILQRGWRDRANRGAEQRLAQRTRQVFLPVSRLKRDPHLEMHTRGG.

The Radical SAM core domain occupies 40-259 (RCGRTMGDLR…STLGKKYGPI (220 aa)). Position 49 (Arg-49) interacts with GTP. [4Fe-4S] cluster contacts are provided by Cys-56 and Cys-60. An S-adenosyl-L-methionine-binding site is contributed by Tyr-62. [4Fe-4S] cluster is bound at residue Cys-63. Arg-99 is a binding site for GTP. Gly-103 lines the S-adenosyl-L-methionine pocket. Thr-134 contributes to the GTP binding site. An S-adenosyl-L-methionine-binding site is contributed by Ser-158. Lys-195 is a GTP binding site. Residue Met-229 participates in S-adenosyl-L-methionine binding. The [4Fe-4S] cluster site is built by Cys-292 and Cys-295. 297–299 (RSR) contacts GTP. Cys-309 lines the [4Fe-4S] cluster pocket.

The protein belongs to the radical SAM superfamily. MoaA family. As to quaternary structure, monomer and homodimer. The cofactor is [4Fe-4S] cluster.

It catalyses the reaction GTP + AH2 + S-adenosyl-L-methionine = (8S)-3',8-cyclo-7,8-dihydroguanosine 5'-triphosphate + 5'-deoxyadenosine + L-methionine + A + H(+). The protein operates within cofactor biosynthesis; molybdopterin biosynthesis. Functionally, catalyzes the cyclization of GTP to (8S)-3',8-cyclo-7,8-dihydroguanosine 5'-triphosphate. The polypeptide is GTP 3',8-cyclase 3 (Mycobacterium bovis (strain ATCC BAA-935 / AF2122/97)).